The sequence spans 660 residues: Methionine--tRNA ligase 1 (660 aa).

The short motif at tyrosine 15–histidine 25 is the 'HIGH' region element. The 'KMSKS' region motif lies at lysine 310–serine 314. Lysine 313 contacts ATP. Residues aspartate 560–lysine 660 enclose the tRNA-binding domain.

The protein belongs to the class-I aminoacyl-tRNA synthetase family. MetG type 2B subfamily. In terms of assembly, homodimer.

It is found in the cytoplasm. It carries out the reaction tRNA(Met) + L-methionine + ATP = L-methionyl-tRNA(Met) + AMP + diphosphate. Its function is as follows. Is required not only for elongation of protein synthesis but also for the initiation of all mRNA translation through initiator tRNA(fMet) aminoacylation. The protein is Methionine--tRNA ligase 1 of Bacillus anthracis.